Reading from the N-terminus, the 157-residue chain is DNA gyrase inhibitor (157 aa).

This sequence belongs to the DNA gyrase inhibitor family. In terms of assembly, interacts with DNA gyrase.

It is found in the cytoplasm. Its function is as follows. Inhibits the supercoiling activity of DNA gyrase. Acts by inhibiting DNA gyrase at an early step, prior to (or at the step of) binding of DNA by the gyrase. It protects cells against toxins that target DNA gyrase, by inhibiting activity of these toxins and reducing the formation of lethal double-strand breaks in the cell. The polypeptide is DNA gyrase inhibitor (Cronobacter sakazakii (strain ATCC BAA-894) (Enterobacter sakazakii)).